We begin with the raw amino-acid sequence, 179 residues long: Large ribosomal subunit protein uL5 (179 aa).

It belongs to the universal ribosomal protein uL5 family. Part of the 50S ribosomal subunit; part of the 5S rRNA/L5/L18/L25 subcomplex. Contacts the 5S rRNA and the P site tRNA. Forms a bridge to the 30S subunit in the 70S ribosome.

Its function is as follows. This is one of the proteins that bind and probably mediate the attachment of the 5S RNA into the large ribosomal subunit, where it forms part of the central protuberance. In the 70S ribosome it contacts protein S13 of the 30S subunit (bridge B1b), connecting the 2 subunits; this bridge is implicated in subunit movement. Contacts the P site tRNA; the 5S rRNA and some of its associated proteins might help stabilize positioning of ribosome-bound tRNAs. The polypeptide is Large ribosomal subunit protein uL5 (Burkholderia ambifaria (strain MC40-6)).